The chain runs to 805 residues: Na(+)/H(+) antiporter subunit A (805 aa).

Transmembrane regions (helical) follow at residues 4–22 (LHWA…PFLY), 29–51 (HTGW…YLSI), 80–102 (SLLF…IFYL), 109–128 (LNNF…GVVL), 132–154 (LIVL…SYWF), 167–189 (MLIT…VMTG), 209–231 (FLPA…PFHI), 244–266 (SAYL…LTPV), 271–293 (AEWF…TSAV), 300–322 (GILA…LGSA), 332–354 (PAFY…TFKG), 375–397 (LGGL…ASMA), 431–453 (IIIV…IMFF), 474–496 (IGML…FPNI), 529–551 (GFNA…FLMM), 597–614 (YFAY…YTMF), 629–651 (IAPY…PFIN), 656–674 (AVVV…FVVF), 679–701 (LALT…FYHL), 714–736 (NVLN…LSSL), and 778–795 (MLEV…IALI).

The protein belongs to the CPA3 antiporters (TC 2.A.63) subunit A family. As to quaternary structure, forms a heterooligomeric complex that consists of seven subunits: MrpA, MrpB, MrpC, MrpD, MrpE, MrpF and MrpG.

The protein resides in the cell membrane. Its function is as follows. Mnh complex is a Na(+)Li(+)/H(+) antiporter involved in Na(+) and/or Li(+) excretion and Na(+) resistance. Na(+)/H(+) antiport consumes a transmembrane electrical potential, and is thus inferred to be electrogenic. Does not transport K(+), Ca(2+) or Mg(2+). The polypeptide is Na(+)/H(+) antiporter subunit A (mrpA) (Alkalihalophilus pseudofirmus (strain ATCC BAA-2126 / JCM 17055 / OF4) (Bacillus pseudofirmus)).